The primary structure comprises 97 residues: Histone H1.C2 (97 aa).

The tract at residues 24 to 97 (AAVPPKKAAP…KKAVKKAPKK (74 aa)) is disordered. Basic residues predominate over residues 31-97 (AAPKKAVAKK…KKAVKKAPKK (67 aa)).

The protein localises to the nucleus. It localises to the chromosome. This chain is Histone H1.C2, found in Trypanosoma cruzi.